Here is a 129-residue protein sequence, read N- to C-terminus: Trefoil factor 2 (129 aa).

An N-terminal signal peptide occupies residues 1-23 (MGRRDAQLLAALLVLGLCALAGS). P-type domains lie at 29-73 (CQCS…FHPL) and 79-122 (DQCV…FFPK). 7 disulfides stabilise this stretch: Cys29–Cys127, Cys31–Cys58, Cys42–Cys57, Cys52–Cys69, Cys81–Cys107, Cys91–Cys106, and Cys101–Cys118.

Stomach.

It is found in the secreted. Its function is as follows. Inhibits gastrointestinal motility and gastric acid secretion. Could function as a structural component of gastric mucus, possibly by stabilizing glycoproteins in the mucus gel through interactions with carbohydrate side chains. This chain is Trefoil factor 2 (TFF2), found in Homo sapiens (Human).